A 210-amino-acid chain; its full sequence is Prolactin (210 aa).

Positions 1-23 are cleaved as a signal peptide; sequence MARRSQGTKLHLAVLCLVVSCHA. 2 disulfide bridges follow: Cys-69-Cys-183 and Cys-200-Cys-210.

This sequence belongs to the somatotropin/prolactin family. Pituitary gland.

Its subcellular location is the secreted. The sequence is that of Prolactin (prl) from Coregonus autumnalis (Arctic cisco).